Reading from the N-terminus, the 103-residue chain is Co-chaperonin GroES (103 aa).

The protein belongs to the GroES chaperonin family. As to quaternary structure, heptamer of 7 subunits arranged in a ring. Interacts with the chaperonin GroEL.

Its subcellular location is the cytoplasm. Functionally, together with the chaperonin GroEL, plays an essential role in assisting protein folding. The GroEL-GroES system forms a nano-cage that allows encapsulation of the non-native substrate proteins and provides a physical environment optimized to promote and accelerate protein folding. GroES binds to the apical surface of the GroEL ring, thereby capping the opening of the GroEL channel. The chain is Co-chaperonin GroES from Picosynechococcus sp. (strain ATCC 27264 / PCC 7002 / PR-6) (Agmenellum quadruplicatum).